We begin with the raw amino-acid sequence, 199 residues long: GTP cyclohydrolase-2 (199 aa).

Residue 49–53 (RVHSE) coordinates GTP. Residues Cys54, Cys65, and Cys67 each contribute to the Zn(2+) site. Residues Gln70, 92-94 (EGR), and Thr114 contribute to the GTP site. Asp126 acts as the Proton acceptor in catalysis. The active-site Nucleophile is the Arg128. Thr149 and Lys154 together coordinate GTP.

It belongs to the GTP cyclohydrolase II family. Requires Zn(2+) as cofactor.

It carries out the reaction GTP + 4 H2O = 2,5-diamino-6-hydroxy-4-(5-phosphoribosylamino)-pyrimidine + formate + 2 phosphate + 3 H(+). It participates in cofactor biosynthesis; riboflavin biosynthesis; 5-amino-6-(D-ribitylamino)uracil from GTP: step 1/4. Its function is as follows. Catalyzes the conversion of GTP to 2,5-diamino-6-ribosylamino-4(3H)-pyrimidinone 5'-phosphate (DARP), formate and pyrophosphate. This chain is GTP cyclohydrolase-2, found in Baumannia cicadellinicola subsp. Homalodisca coagulata.